The sequence spans 415 residues: Gamma-glutamyl phosphate reductase (415 aa).

The protein belongs to the gamma-glutamyl phosphate reductase family.

The protein localises to the cytoplasm. The enzyme catalyses L-glutamate 5-semialdehyde + phosphate + NADP(+) = L-glutamyl 5-phosphate + NADPH + H(+). The protein operates within amino-acid biosynthesis; L-proline biosynthesis; L-glutamate 5-semialdehyde from L-glutamate: step 2/2. Catalyzes the NADPH-dependent reduction of L-glutamate 5-phosphate into L-glutamate 5-semialdehyde and phosphate. The product spontaneously undergoes cyclization to form 1-pyrroline-5-carboxylate. In Desulforamulus reducens (strain ATCC BAA-1160 / DSM 100696 / MI-1) (Desulfotomaculum reducens), this protein is Gamma-glutamyl phosphate reductase.